The sequence spans 344 residues: Heat-inducible transcription repressor HrcA (344 aa).

It belongs to the HrcA family.

Negative regulator of class I heat shock genes (grpE-dnaK-dnaJ and groELS operons). Prevents heat-shock induction of these operons. The protein is Heat-inducible transcription repressor HrcA of Desulforudis audaxviator (strain MP104C).